The primary structure comprises 137 residues: Large-conductance mechanosensitive channel (137 aa).

Helical transmembrane passes span 9-29 (AFAV…GAAF) and 79-99 (IQTI…VKAI).

The protein belongs to the MscL family. Homopentamer.

It is found in the cell inner membrane. Channel that opens in response to stretch forces in the membrane lipid bilayer. May participate in the regulation of osmotic pressure changes within the cell. The polypeptide is Large-conductance mechanosensitive channel (Pseudomonas aeruginosa (strain UCBPP-PA14)).